The chain runs to 249 residues: MIKLVLLRHGESVWNKENRFTGWKDVDLTEKGVQEAKRAGEFMKKEGLDFDIAYTSVLKRAIRTLNLALNEMDLQWIPVNKTWRLNERHYGALQGLNKSETAEKFGEEQVLIWRRSYDTPPPALEKSDERYPGHDPRYKDLTEAELPLTECLKDTVERFLPYWHETIAPTIKSGKRVIIAAHGNSLRSLVKYLDNISDEDIVGLNIPTGMPLVYELDDDMKPIKNYYLGDPDDVAKAMASVANQGKAKA.

Substrate contacts are provided by residues 8 to 15, 21 to 22, arginine 60, 87 to 90, lysine 98, 114 to 115, and 183 to 184; these read RHGESVWN, TG, ERHY, RR, and GN. Catalysis depends on histidine 9, which acts as the Tele-phosphohistidine intermediate. The active-site Proton donor/acceptor is the glutamate 87.

Belongs to the phosphoglycerate mutase family. BPG-dependent PGAM subfamily.

It carries out the reaction (2R)-2-phosphoglycerate = (2R)-3-phosphoglycerate. The protein operates within carbohydrate degradation; glycolysis; pyruvate from D-glyceraldehyde 3-phosphate: step 3/5. Catalyzes the interconversion of 2-phosphoglycerate and 3-phosphoglycerate. This chain is 2,3-bisphosphoglycerate-dependent phosphoglycerate mutase, found in Chloroherpeton thalassium (strain ATCC 35110 / GB-78).